A 509-amino-acid polypeptide reads, in one-letter code: ATP synthase subunit alpha (509 aa).

169–176 provides a ligand contact to ATP; that stretch reads GDRQTGKT.

Belongs to the ATPase alpha/beta chains family. As to quaternary structure, F-type ATPases have 2 components, CF(1) - the catalytic core - and CF(0) - the membrane proton channel. CF(1) has five subunits: alpha(3), beta(3), gamma(1), delta(1), epsilon(1). CF(0) has three main subunits: a(1), b(2) and c(9-12). The alpha and beta chains form an alternating ring which encloses part of the gamma chain. CF(1) is attached to CF(0) by a central stalk formed by the gamma and epsilon chains, while a peripheral stalk is formed by the delta and b chains.

The protein localises to the cell inner membrane. It carries out the reaction ATP + H2O + 4 H(+)(in) = ADP + phosphate + 5 H(+)(out). Functionally, produces ATP from ADP in the presence of a proton gradient across the membrane. The alpha chain is a regulatory subunit. The polypeptide is ATP synthase subunit alpha (Bradyrhizobium diazoefficiens (strain JCM 10833 / BCRC 13528 / IAM 13628 / NBRC 14792 / USDA 110)).